A 208-amino-acid polypeptide reads, in one-letter code: Calcyphosin-like protein (208 aa).

EF-hand domains lie at 39–74, 75–110, 111–146, and 154–191; these read AGIK…YAVV, MEKE…PMSR, ARKE…KHHP, and SEEQ…VSAS. Ca(2+) is bound by residues D52, D54, N56, T58, E63, D88, D90, N92, T94, and E99.

It is found in the cytoplasm. The protein is Calcyphosin-like protein (CAPSL) of Homo sapiens (Human).